A 118-amino-acid chain; its full sequence is Large ribosomal subunit protein uL18 (118 aa).

This sequence belongs to the universal ribosomal protein uL18 family. As to quaternary structure, part of the 50S ribosomal subunit; part of the 5S rRNA/L5/L18/L25 subcomplex. Contacts the 5S and 23S rRNAs.

Functionally, this is one of the proteins that bind and probably mediate the attachment of the 5S RNA into the large ribosomal subunit, where it forms part of the central protuberance. The sequence is that of Large ribosomal subunit protein uL18 from Zymomonas mobilis subsp. mobilis (strain ATCC 31821 / ZM4 / CP4).